We begin with the raw amino-acid sequence, 615 residues long: Extracellular metalloproteinase 1 (615 aa).

The signal sequence occupies residues 1 to 8; the sequence is SLPLHVLA. The propeptide occupies 9–235; sequence HPQPSTSTSL…VHNVVDYVAH (227 aa). The N-linked (GlcNAc...) asparagine glycan is linked to N276. Position 419 (H419) interacts with Zn(2+). Residue E420 is part of the active site. H423 lines the Zn(2+) pocket. N464, N583, and N612 each carry an N-linked (GlcNAc...) asparagine glycan.

It belongs to the peptidase M36 family. The cofactor is Zn(2+).

It is found in the secreted. Functionally, secreted metalloproteinase probably acting as a virulence factor. The polypeptide is Extracellular metalloproteinase 1 (MEP1) (Trichophyton equinum (Horse ringworm fungus)).